The chain runs to 212 residues: Pyridoxine/pyridoxamine 5'-phosphate oxidase (212 aa).

Residues 59 to 64 (RMVLMK), 74 to 75 (YS), K81, and Q103 contribute to the FMN site. Residue K64 coordinates substrate. Residues Y121 and R125 each coordinate substrate. Residues 138 to 139 (QS) and W183 each bind FMN. 189–191 (RLH) serves as a coordination point for substrate. An FMN-binding site is contributed by R193.

It belongs to the pyridoxamine 5'-phosphate oxidase family. Homodimer. FMN serves as cofactor.

The catalysed reaction is pyridoxamine 5'-phosphate + O2 + H2O = pyridoxal 5'-phosphate + H2O2 + NH4(+). It catalyses the reaction pyridoxine 5'-phosphate + O2 = pyridoxal 5'-phosphate + H2O2. It functions in the pathway cofactor metabolism; pyridoxal 5'-phosphate salvage; pyridoxal 5'-phosphate from pyridoxamine 5'-phosphate: step 1/1. Its pathway is cofactor metabolism; pyridoxal 5'-phosphate salvage; pyridoxal 5'-phosphate from pyridoxine 5'-phosphate: step 1/1. In terms of biological role, catalyzes the oxidation of either pyridoxine 5'-phosphate (PNP) or pyridoxamine 5'-phosphate (PMP) into pyridoxal 5'-phosphate (PLP). This Rhodopseudomonas palustris (strain HaA2) protein is Pyridoxine/pyridoxamine 5'-phosphate oxidase.